Here is a 129-residue protein sequence, read N- to C-terminus: Large ribosomal subunit protein uL14m (129 aa).

The protein belongs to the universal ribosomal protein uL14 family.

The protein resides in the mitochondrion. The sequence is that of Large ribosomal subunit protein uL14m (RPL14) from Acanthamoeba castellanii (Amoeba).